Reading from the N-terminus, the 186-residue chain is Peptide deformylase 2 (186 aa).

Fe cation-binding residues include Cys104 and His146. Glu147 is a catalytic residue. A Fe cation-binding site is contributed by His150.

It belongs to the polypeptide deformylase family. Fe(2+) is required as a cofactor.

The enzyme catalyses N-terminal N-formyl-L-methionyl-[peptide] + H2O = N-terminal L-methionyl-[peptide] + formate. Removes the formyl group from the N-terminal Met of newly synthesized proteins. Requires at least a dipeptide for an efficient rate of reaction. N-terminal L-methionine is a prerequisite for activity but the enzyme has broad specificity at other positions. The sequence is that of Peptide deformylase 2 from Streptomyces avermitilis (strain ATCC 31267 / DSM 46492 / JCM 5070 / NBRC 14893 / NCIMB 12804 / NRRL 8165 / MA-4680).